A 36-amino-acid chain; its full sequence is Protein YnfP (36 aa).

The polypeptide is Protein YnfP (Escherichia coli (strain K12)).